The primary structure comprises 130 residues: Small ribosomal subunit protein uS8B (130 aa).

It belongs to the universal ribosomal protein uS8 family.

This is Small ribosomal subunit protein uS8B (RpS15Ab) from Drosophila melanogaster (Fruit fly).